Here is a 120-residue protein sequence, read N- to C-terminus: UPF0231 protein Spro_4007 (120 aa).

The protein belongs to the UPF0231 family.

This chain is UPF0231 protein Spro_4007, found in Serratia proteamaculans (strain 568).